Consider the following 219-residue polypeptide: Swarming motility regulation protein RssB (219 aa).

Residues 2-116 (NILLVEDDLQ…ELISRVKAVN (115 aa)) enclose the Response regulatory domain. 4-aspartylphosphate is present on Asp51. The ompR/PhoB-type DNA-binding region spans 124-218 (SQTWSLGALY…VRGIGYLLKK (95 aa)).

It is found in the cytoplasm. In terms of biological role, member of the two-component regulatory system RssA/RssB involved in regulation of swarming motility which has been shown to be inhibited by saturated fatty acids. RssA/RssB regulates cellular fatty acid composition, hemolysin production and cell surface topography. RssA/RssB negatively regulates the activity of SlhBA. It can also act as a negative regulator for the control of the swarming initiation. RssB binds its own promoter. The chain is Swarming motility regulation protein RssB (rssB) from Serratia marcescens.